Here is a 554-residue protein sequence, read N- to C-terminus: Hydroxylamine reductase (554 aa).

[2Fe-2S] cluster-binding residues include C3, C6, C18, and C25. Hybrid [4Fe-2O-2S] cluster is bound by residues H252, E276, C320, C408, C436, C461, E495, and K497. At C408 the chain carries Cysteine persulfide.

The protein belongs to the HCP family. Requires [2Fe-2S] cluster as cofactor. Hybrid [4Fe-2O-2S] cluster is required as a cofactor.

The protein resides in the cytoplasm. It catalyses the reaction A + NH4(+) + H2O = hydroxylamine + AH2 + H(+). In terms of biological role, catalyzes the reduction of hydroxylamine to form NH(3) and H(2)O. The sequence is that of Hydroxylamine reductase from Shewanella putrefaciens (strain CN-32 / ATCC BAA-453).